Consider the following 287-residue polypeptide: Uroplakin-3a (287 aa).

A signal peptide spans 1–18 (MPPLWALLALGCLRFGSA). Residues 19–207 (VNLQPQLASV…DTWPGRRSGG (189 aa)) lie on the Lumenal side of the membrane. N-linked (GlcNAc...) asparagine glycosylation is found at N74, N139, and N170. Residues 208–235 (MIVITSILGSLPFFLLVGFAGAIALSLV) traverse the membrane as a helical segment. At 236–287 (DMGSSDGETTHDSQITQEAVPKSLGASESSYTSVNRGPPLDRAEVYSSKLQD) the chain is on the cytoplasmic side. Positions 242–287 (GETTHDSQITQEAVPKSLGASESSYTSVNRGPPLDRAEVYSSKLQD) are disordered. The segment covering 261 to 270 (ASESSYTSVN) has biased composition (polar residues).

The protein belongs to the uroplakin-3 family. As to quaternary structure, heterodimer with uroplakin-1B (UPK1B). As to expression, expressed in ureter.

Its subcellular location is the endoplasmic reticulum membrane. In terms of biological role, component of the asymmetric unit membrane (AUM); a highly specialized biomembrane elaborated by terminally differentiated urothelial cells. May play an important role in AUM-cytoskeleton interaction in terminally differentiated urothelial cells. It also contributes to the formation of urothelial glycocalyx which may play an important role in preventing bacterial adherence. In Homo sapiens (Human), this protein is Uroplakin-3a (UPK3A).